Consider the following 834-residue polypeptide: MSDDSFSSDEDWDELDTQVVDKIENEYHNNTIGLNGYSVDEYFDANDSNRYRLQHELDESAAQQWVYPINVSFRDYQFNIVQKALFENVLVALPTGLGKTFIAAVVMMNYLRWFPKSYIVFMAPTKPLVTQQMEACYKITGIPKSQTAELSGHVPVTTRNQYYQSRNVFFVTPQTILNDIKHGICDRTRISCLVIDEAHRSTGNYAYVEVVHLLSLSNKNFRILALSATPGNKLEAIQNVIDSLHISRIEIRTENSIDISQYVQKKEVDFFPVDLSAEITDIRDRFSSILEPMLQKLNKGNYYRIQNAKDITSFTVVQAKQAFLAMSGQNFPANQKWDILNTFDALATFAYPLNLLLNHGIRPFYQKLREVEEECFVGRSGYKKRIINHENYRPLMDDIEILLRDQSFVGHPKLEHLERIVTEYFEKEQTKDTRIMIFVEIRSSAEEILRFLGKFYPNVRPAIFIGQSAVRKAAGMSQKLQNETVKQFQKGEVNTLIATSIGEEGLDIGEVDMIICYDASASPIRMLQRMGRTGRKRKGYIYMLLTRGKEEAKWERAKDAYRTLQDNIVSGRGLSLSEKSYRILPEKFRPVCDKRVIEIPKENEEVVVAPKKVQLRTKIKKKFFMPENALNGFITASALGKPKRALAKSEESPFEICPVTYSIEQEKKLEKYKRVCLRGLDIHRNRRLSQLSVTGRIPHSLATKSIHSFLKHLNTIDSQKAQEWRREINNQFQVSNINSTDRDTKQPKMHDFRQPLHPNPMTTLKRKGQHNSFSYDKSTLFYDNNNNLEEDLPDVNISISSRNEEASKTKPFDDRQQRLQQLVEKRKRMKGMLI.

Residues 80 to 248 (IVQKALFENV…NVIDSLHISR (169 aa)) enclose the Helicase ATP-binding domain. Position 93 to 100 (93 to 100 (LPTGLGKT)) interacts with ATP. The DEAH box motif lies at 196–199 (DEAH). Residues 416-582 (HLERIVTEYF…GLSLSEKSYR (167 aa)) form the Helicase C-terminal domain. Positions 650–690 (EESPFEICPVTYSIEQEKKLEKYKRVCLRGLDIHRNRRLSQ) are interaction with MHF complex. Residues 738-769 (NSTDRDTKQPKMHDFRQPLHPNPMTTLKRKGQ) are disordered. Residues 740 to 754 (TDRDTKQPKMHDFRQ) show a composition bias toward basic and acidic residues.

This sequence belongs to the DEAD box helicase family. DEAH subfamily. FANCM sub-subfamily.

It is found in the cytoplasm. The protein localises to the nucleus. It localises to the nucleolus. It carries out the reaction ATP + H2O = ADP + phosphate + H(+). In terms of biological role, ATP-dependent DNA helicase involved in DNA damage repair by homologous recombination and in genome maintenance. Capable of unwinding D-loops. Plays a role in limiting crossover recombination during mitotic DNA double-strand break (DSB) repair. Component of a FANCM-MHF complex which promotes gene conversion at blocked replication forks, probably by reversal of the stalled fork. FANCM-MHF also promotes non-crossover recombination in meiotic cells. The polypeptide is ATP-dependent DNA helicase fml1 (Schizosaccharomyces pombe (strain 972 / ATCC 24843) (Fission yeast)).